The primary structure comprises 242 residues: Putative S-adenosyl-L-methionine-dependent methyltransferase Mmcs_0580 (242 aa).

S-adenosyl-L-methionine-binding positions include aspartate 104 and 134–135 (DL).

This sequence belongs to the UPF0677 family.

Exhibits S-adenosyl-L-methionine-dependent methyltransferase activity. The polypeptide is Putative S-adenosyl-L-methionine-dependent methyltransferase Mmcs_0580 (Mycobacterium sp. (strain MCS)).